Consider the following 301-residue polypeptide: Phosphatidylserine decarboxylase proenzyme (301 aa).

Catalysis depends on charge relay system; for autoendoproteolytic cleavage activity residues D117, H173, and S260. S260 functions as the Schiff-base intermediate with substrate; via pyruvic acid; for decarboxylase activity in the catalytic mechanism. Residue S260 is modified to Pyruvic acid (Ser); by autocatalysis.

It belongs to the phosphatidylserine decarboxylase family. PSD-B subfamily. Prokaryotic type II sub-subfamily. As to quaternary structure, heterodimer of a large membrane-associated beta subunit and a small pyruvoyl-containing alpha subunit. Pyruvate is required as a cofactor. Post-translationally, is synthesized initially as an inactive proenzyme. Formation of the active enzyme involves a self-maturation process in which the active site pyruvoyl group is generated from an internal serine residue via an autocatalytic post-translational modification. Two non-identical subunits are generated from the proenzyme in this reaction, and the pyruvate is formed at the N-terminus of the alpha chain, which is derived from the carboxyl end of the proenzyme. The autoendoproteolytic cleavage occurs by a canonical serine protease mechanism, in which the side chain hydroxyl group of the serine supplies its oxygen atom to form the C-terminus of the beta chain, while the remainder of the serine residue undergoes an oxidative deamination to produce ammonia and the pyruvoyl prosthetic group on the alpha chain. During this reaction, the Ser that is part of the protease active site of the proenzyme becomes the pyruvoyl prosthetic group, which constitutes an essential element of the active site of the mature decarboxylase.

Its subcellular location is the cell membrane. The enzyme catalyses a 1,2-diacyl-sn-glycero-3-phospho-L-serine + H(+) = a 1,2-diacyl-sn-glycero-3-phosphoethanolamine + CO2. The protein operates within phospholipid metabolism; phosphatidylethanolamine biosynthesis; phosphatidylethanolamine from CDP-diacylglycerol: step 2/2. Its function is as follows. Catalyzes the formation of phosphatidylethanolamine (PtdEtn) from phosphatidylserine (PtdSer). This chain is Phosphatidylserine decarboxylase proenzyme, found in Chlamydia trachomatis serovar L2b (strain UCH-1/proctitis).